The following is a 726-amino-acid chain: MAAAKWLIASLAFASSGLAFTPEDFISAPRRGEAIPDPKGELAVFHVSKYNFDKKDRPSGWNLLNLKNGDISVLTTDSDVSEITWLGDGTKVVYVNGTDSVKGGVGIWISDAKNFGNAYKAGSVNGAFSGLKLAKSGDKINFVGYGQSTTKGDLYNEAAAKEAVSSARIYDSLFVRHWDTYVGTQFNAVFSGALTKNGDKYSFDGKLKNLVQPVKYAESPYPPFGGSGDYDLSSDGKTVAFMSKAPELPKANLTTSYIFLVPHDGSRVAEPINKRNGPRTPQGIEGASSSPVFSPDGKRIAYLQMATKNYESDRRVIHIAEVGSNKPVQRIASNWDRSPEAVKWSSDGRTLYVTAEDHATGKLFTLPADARDNHKPEVVKHDGSVSSFYFVGSSKSVLISGNSLWSNALFQVATPGRPNRKLFYANEHDPELKGLGPNDIEPLWVDGARTKIHSWIVKPTGFDKNKVYPLAFLIHGGPQGSWGDSWSTRWNPRVWADQGYVVVAPNPTGSTGFGQKLTDDITNDWGGAPYKDLVKIWEHVHNNIKYIDTDNGIAAGASFGGFMVNWIQGQDLGRKFKALVSHDGTFVGSSKIGTDELFFIEHDFNGTFFEARQNYDRWDCSKPELVAKWSTPQLVVHNDFDFRLSVAEGVGLFNVLQEKGVPSRFLNFPDETHWVTKPENSLVWHQQVLGWVNKWSGINKSNPKSIKLSDCPIEVVDHEAHSYFDY.

Positions 1–19 (MAAAKWLIASLAFASSGLA) are cleaved as a signal peptide. N-linked (GlcNAc...) asparagine glycans are attached at residues Asn96 and Asn252. The disordered stretch occupies residues 269 to 291 (AEPINKRNGPRTPQGIEGASSSP). Ser558 acts as the Charge relay system in catalysis. Asn605 is a glycosylation site (N-linked (GlcNAc...) asparagine). Active-site charge relay system residues include Asp641 and His673. N-linked (GlcNAc...) asparagine glycosylation occurs at Asn699.

Belongs to the peptidase S9C family.

The protein resides in the secreted. Extracellular dipeptidyl-peptidase which removes N-terminal dipeptides sequentially from polypeptides having unsubstituted N-termini. Contributes to pathogenicity. The protein is Probable dipeptidyl-peptidase 5 (DPP5) of Trichophyton verrucosum (strain HKI 0517).